The sequence spans 165 residues: Probable DNA polymerase III subunit chi (165 aa).

It belongs to the DNA polymerase III chi/HolC chain family. In terms of assembly, DNA polymerase III contains a core (composed of alpha, epsilon and theta chains) that associates with a tau subunit. This core dimerizes to form the POLIII' complex. PolIII' associates with the gamma complex (composed of gamma, delta, delta', psi and chi chains) and with the beta chain to form the complete DNA polymerase III complex. Interacts directly with the psi subunit (holD). The only subunit of the DNA polymerase III holoenzyme known to interact with single-stranded DNA binding protein (SSB).

It carries out the reaction DNA(n) + a 2'-deoxyribonucleoside 5'-triphosphate = DNA(n+1) + diphosphate. In terms of biological role, part of the beta sliding clamp loading complex, which hydrolyzes ATP to load the beta clamp onto primed DNA to form the DNA replication pre-initiation complex. DNA polymerase III is a complex, multichain enzyme responsible for most of the replicative synthesis in bacteria. This DNA polymerase also exhibits 3' to 5' exonuclease activity. This is Probable DNA polymerase III subunit chi from Rickettsia prowazekii (strain Madrid E).